The primary structure comprises 173 residues: uncharacterized protein (173 aa).

The segment at 1–23 (ELTSVAGSGRVDSTPLGSRGVTD) is disordered.

As to expression, component of the acid-insoluble and acid-soluble organic matrix of calcified layers of the shell (at protein level).

It localises to the secreted. This is an uncharacterized protein from Lottia gigantea (Giant owl limpet).